We begin with the raw amino-acid sequence, 218 residues long: Glutathione S-transferase Mu 4 (218 aa).

The GST N-terminal domain maps to 1 to 88 (MPMTLGYWDI…YIARKHNLCG (88 aa)). Glutathione contacts are provided by residues 7 to 8 (YW), 46 to 50 (WLSEK), 59 to 60 (NL), and 72 to 73 (QS). A GST C-terminal domain is found at 90–208 (TEEEKIRVDI…KTSRFLRTPL (119 aa)). Y116 lines the substrate pocket.

It belongs to the GST superfamily. Mu family. As to quaternary structure, homodimer.

It is found in the cytoplasm. The catalysed reaction is RX + glutathione = an S-substituted glutathione + a halide anion + H(+). The enzyme catalyses 1-chloro-2,4-dinitrobenzene + glutathione = 2,4-dinitrophenyl-S-glutathione + chloride + H(+). It carries out the reaction (13S,14S)-epoxy-(4Z,7Z,9E,11E,16Z,19Z)-docosahexaenoate + glutathione = (13R)-S-glutathionyl-(14S)-hydroxy-(4Z,7Z,9E,11E,16Z,19Z)-docosahexaenoate. It catalyses the reaction leukotriene C4 = leukotriene A4 + glutathione. In terms of biological role, conjugation of reduced glutathione to a wide number of exogenous and endogenous hydrophobic electrophiles. Catalyzes the conjugation of leukotriene A4 with reduced glutathione (GSH) to form leukotriene C4. Can also catalyze the transfer of a glutathionyl group from glutathione (GSH) to 13(S),14(S)-epoxy-docosahexaenoic acid to form maresin conjugate in tissue regeneration 1 (MCTR1), a bioactive lipid mediator that possess potent anti-inflammatory and proresolving actions. In Rattus norvegicus (Rat), this protein is Glutathione S-transferase Mu 4 (Gstm4).